The following is a 58-amino-acid chain: Large ribosomal subunit protein uL30 (58 aa).

The protein belongs to the universal ribosomal protein uL30 family. Part of the 50S ribosomal subunit.

The chain is Large ribosomal subunit protein uL30 from Pelobacter propionicus (strain DSM 2379 / NBRC 103807 / OttBd1).